The sequence spans 205 residues: Holliday junction branch migration complex subunit RuvA (205 aa).

Residues 1 to 64 (MIGKLKGTID…EDQLRLFGFL (64 aa)) are domain I. The domain II stretch occupies residues 65-143 (SALEREWFRL…AFAGEMSASI (79 aa)). The interval 144-153 (GLKQELGEGV) is flexible linker. The domain III stretch occupies residues 153-205 (VAAAPVSDAVSALTNLGYSRDQAANAVAAALKNGGEGGDSAKLIRLGLKELAR).

The protein belongs to the RuvA family. Homotetramer. Forms an RuvA(8)-RuvB(12)-Holliday junction (HJ) complex. HJ DNA is sandwiched between 2 RuvA tetramers; dsDNA enters through RuvA and exits via RuvB. An RuvB hexamer assembles on each DNA strand where it exits the tetramer. Each RuvB hexamer is contacted by two RuvA subunits (via domain III) on 2 adjacent RuvB subunits; this complex drives branch migration. In the full resolvosome a probable DNA-RuvA(4)-RuvB(12)-RuvC(2) complex forms which resolves the HJ.

The protein resides in the cytoplasm. Functionally, the RuvA-RuvB-RuvC complex processes Holliday junction (HJ) DNA during genetic recombination and DNA repair, while the RuvA-RuvB complex plays an important role in the rescue of blocked DNA replication forks via replication fork reversal (RFR). RuvA specifically binds to HJ cruciform DNA, conferring on it an open structure. The RuvB hexamer acts as an ATP-dependent pump, pulling dsDNA into and through the RuvAB complex. HJ branch migration allows RuvC to scan DNA until it finds its consensus sequence, where it cleaves and resolves the cruciform DNA. The chain is Holliday junction branch migration complex subunit RuvA from Sinorhizobium fredii (strain NBRC 101917 / NGR234).